The sequence spans 364 residues: tRNA 2-selenouridine synthase (364 aa).

In terms of domain architecture, Rhodanese spans 14 to 137; sequence LIADTPIIDV…LRQTAIQATI (124 aa). Catalysis depends on cysteine 97, which acts as the S-selanylcysteine intermediate.

It belongs to the SelU family. Monomer.

It catalyses the reaction 5-methylaminomethyl-2-thiouridine(34) in tRNA + selenophosphate + (2E)-geranyl diphosphate + H2O + H(+) = 5-methylaminomethyl-2-selenouridine(34) in tRNA + (2E)-thiogeraniol + phosphate + diphosphate. The enzyme catalyses 5-methylaminomethyl-2-thiouridine(34) in tRNA + (2E)-geranyl diphosphate = 5-methylaminomethyl-S-(2E)-geranyl-thiouridine(34) in tRNA + diphosphate. It carries out the reaction 5-methylaminomethyl-S-(2E)-geranyl-thiouridine(34) in tRNA + selenophosphate + H(+) = 5-methylaminomethyl-2-(Se-phospho)selenouridine(34) in tRNA + (2E)-thiogeraniol. The catalysed reaction is 5-methylaminomethyl-2-(Se-phospho)selenouridine(34) in tRNA + H2O = 5-methylaminomethyl-2-selenouridine(34) in tRNA + phosphate. Functionally, involved in the post-transcriptional modification of the uridine at the wobble position (U34) of tRNA(Lys), tRNA(Glu) and tRNA(Gln). Catalyzes the conversion of 2-thiouridine (S2U-RNA) to 2-selenouridine (Se2U-RNA). Acts in a two-step process involving geranylation of 2-thiouridine (S2U) to S-geranyl-2-thiouridine (geS2U) and subsequent selenation of the latter derivative to 2-selenouridine (Se2U) in the tRNA chain. In Escherichia coli (strain ATCC 8739 / DSM 1576 / NBRC 3972 / NCIMB 8545 / WDCM 00012 / Crooks), this protein is tRNA 2-selenouridine synthase.